A 642-amino-acid polypeptide reads, in one-letter code: Threonine--tRNA ligase (642 aa).

Residues 1–61 form the TGS domain; the sequence is MPIITLPDGS…SEDANLEIIT (61 aa). The interval 243–534 is catalytic; it reads DHRKIGKALD…ITEEYAGFFP (292 aa). The Zn(2+) site is built by C334, H385, and H511.

The protein belongs to the class-II aminoacyl-tRNA synthetase family. As to quaternary structure, homodimer. The cofactor is Zn(2+).

The protein localises to the cytoplasm. It catalyses the reaction tRNA(Thr) + L-threonine + ATP = L-threonyl-tRNA(Thr) + AMP + diphosphate + H(+). Its function is as follows. Catalyzes the attachment of threonine to tRNA(Thr) in a two-step reaction: L-threonine is first activated by ATP to form Thr-AMP and then transferred to the acceptor end of tRNA(Thr). Also edits incorrectly charged L-seryl-tRNA(Thr). This chain is Threonine--tRNA ligase, found in Histophilus somni (strain 129Pt) (Haemophilus somnus).